We begin with the raw amino-acid sequence, 223 residues long: Protein DEHYDRATION-INDUCED 19 homolog 3 (223 aa).

Phosphothreonine is present on Thr114. Residue Ser116 is modified to Phosphoserine.

This sequence belongs to the Di19 family. Phosphorylated in vitro by CPK3 or CPK11. In terms of tissue distribution, expressed in seedlings, roots, leaves, stems, flowers and siliques.

The protein localises to the nucleus. The polypeptide is Protein DEHYDRATION-INDUCED 19 homolog 3 (DI19-3) (Arabidopsis thaliana (Mouse-ear cress)).